Here is a 1523-residue protein sequence, read N- to C-terminus: Lysophospholipase nte1 (1523 aa).

The Cytoplasmic portion of the chain corresponds to 1–66 (MADGVTLVDS…LPPVPTTMAG (66 aa)). A helical transmembrane segment spans residues 67 to 87 (WIGWVFSFFFQVIPSVLYWVI). The Lumenal segment spans residues 88–109 (TFSTITLPTWLFTLFSMSLTFT). A helical membrane pass occupies residues 110 to 130 (MNFTTLLLIVLAMVSTISWFI). Over 131-1523 (RYRFLNMYSR…RTMAPRRASI (1393 aa)) the chain is Cytoplasmic. Disordered stretches follow at residues 309–384 (VPNS…KSVH) and 524–545 (RAATVVTPESAPAEHDTYGVSP). Over residues 370–382 (ESRKHSSRKRRKS) the composition is skewed to basic residues. A nucleoside 3',5'-cyclic phosphate-binding positions include 681–800 (GGTS…GAVA) and 841–961 (RLTS…IAQR). One can recognise a PNPLA domain in the interval 1220–1384 (LVLGGGGARG…IDNLTVDHMK (165 aa)). The short motif at 1224–1229 (GGGARG) is the GXGXXG element. The GXSXG motif lies at 1251 to 1255 (GTSIG). S1253 acts as the Nucleophile in catalysis. D1371 (proton acceptor) is an active-site residue. The DGA/G signature appears at 1371-1373 (DGG). Positions 1502 to 1523 (LPEETEEKKKLQRTMAPRRASI) are disordered.

This sequence belongs to the NTE family.

Its subcellular location is the endoplasmic reticulum membrane. The catalysed reaction is a 1-acyl-sn-glycero-3-phosphocholine + H2O = sn-glycerol 3-phosphocholine + a fatty acid + H(+). Its activity is regulated as follows. Inhibited by organophosphorus esters. Functionally, intracellular phospholipase B that catalyzes the double deacylation of phosphatidylcholine (PC) to glycerophosphocholine (GroPCho). Plays an important role in membrane lipid homeostasis. Responsible for the rapid PC turnover in response to inositol, elevated temperatures, or when choline is present in the growth medium. The chain is Lysophospholipase nte1 (nte1) from Neosartorya fischeri (strain ATCC 1020 / DSM 3700 / CBS 544.65 / FGSC A1164 / JCM 1740 / NRRL 181 / WB 181) (Aspergillus fischerianus).